A 206-amino-acid polypeptide reads, in one-letter code: Guanylate kinase (206 aa).

One can recognise a Guanylate kinase-like domain in the interval 5-184; sequence GMLIVLSGPS…AAERIKAIIR (180 aa). Residue 12 to 19 participates in ATP binding; the sequence is GPSGVGKG.

This sequence belongs to the guanylate kinase family.

It is found in the cytoplasm. The enzyme catalyses GMP + ATP = GDP + ADP. Its function is as follows. Essential for recycling GMP and indirectly, cGMP. The protein is Guanylate kinase of Lactiplantibacillus plantarum (strain ATCC BAA-793 / NCIMB 8826 / WCFS1) (Lactobacillus plantarum).